Consider the following 202-residue polypeptide: Dephospho-CoA kinase (202 aa).

The 197-residue stretch at 6–202 folds into the DPCK domain; sequence KISVTGDPSS…QCFKALKGTI (197 aa). 14–19 lines the ATP pocket; sequence SSGKTE.

It belongs to the CoaE family.

The protein localises to the cytoplasm. The catalysed reaction is 3'-dephospho-CoA + ATP = ADP + CoA + H(+). The protein operates within cofactor biosynthesis; coenzyme A biosynthesis; CoA from (R)-pantothenate: step 5/5. Its function is as follows. Catalyzes the phosphorylation of the 3'-hydroxyl group of dephosphocoenzyme A to form coenzyme A. The polypeptide is Dephospho-CoA kinase (Chlamydia trachomatis serovar D (strain ATCC VR-885 / DSM 19411 / UW-3/Cx)).